We begin with the raw amino-acid sequence, 147 residues long: MKVTAATRSRARHFAMQAIYQWQMNGNPLHVIEAEFHTDNDMSKVDTEYFHELFHGVAADKSALDACFLPHLKSLPLEKLDPVTLALLRQATFELKNRVDVPYKVVINEAVNLAKKFGAEDSHKFVNGVLDKVAADLRALEFNAARS.

The protein belongs to the NusB family.

In terms of biological role, involved in transcription antitermination. Required for transcription of ribosomal RNA (rRNA) genes. Binds specifically to the boxA antiterminator sequence of the ribosomal RNA (rrn) operons. The chain is Transcription antitermination protein NusB from Teredinibacter turnerae (strain ATCC 39867 / T7901).